The primary structure comprises 173 residues: ADP-ribose 1''-phosphate phosphatase (173 aa).

The region spanning 1 to 173 (MIRYIKGDLL…YDVEFNVYVI (173 aa)) is the Macro domain. Substrate contacts are provided by residues 7–9 (GDL), 26–28 (ACN), 33–38 (WGGGIA), and 145–151 (INAGIFA).

Belongs to the POA1 family.

The enzyme catalyses ADP-alpha-D-ribose 1''-phosphate + H2O = ADP-D-ribose + phosphate. Functionally, highly specific phosphatase involved in the metabolism of ADP-ribose 1''-phosphate (Appr1p) which is produced as a consequence of tRNA splicing. The chain is ADP-ribose 1''-phosphate phosphatase (POA1) from Scheffersomyces stipitis (strain ATCC 58785 / CBS 6054 / NBRC 10063 / NRRL Y-11545) (Yeast).